The primary structure comprises 315 residues: Tryptophan prenyltransferase ComQ (315 aa).

Mg(2+) contacts are provided by Asp-95 and Asp-99.

Belongs to the FPP/GGPP synthase family. The cofactor is Mg(2+).

It is found in the cell membrane. It catalyses the reaction L-tryptophyl-[protein] + (2E,6E)-farnesyl diphosphate = (2S,3R)-3-farnesyl-2,3-dihydro-2,N(alpha)-cyclo-L-tryptophyl-[protein] + diphosphate. In terms of biological role, part of a major quorum-sensing system that regulates the development of genetic competence. Involved in the maturation of the competence pheromone ComX. Acts by catalyzing the transfer of a farnesyl group on the ComX pheromone. In vitro, can also catalyze the farnesylation of single tryptophan and tryptophan derivatives. The polypeptide is Tryptophan prenyltransferase ComQ (Bacillus subtilis subsp. natto (strain BEST195)).